Consider the following 169-residue polypeptide: Tumor suppressor ARF (169 aa).

The segment at 1–63 (MGRRFLVTVR…RRGPHRNPGP (63 aa)) is interaction with CDK5RAP3 and MDM2. Residues 54-73 (RRGPHRNPGPGDDDGQRSRS) are disordered.

As to quaternary structure, does not interact with cyclins, CDK1, CDK2, CDK4, CDK5 or CDK6. Interacts with COMMD1. Binds to BCL6, E2F1, HUWE1, MDM2, MYC, NPM1/B23, TOP1/TOPOI and UBE2I/UBC9. Interacts with TBRG1. Interacts with CDKN2AIP and E4F1. Interacts with CDK5RAP3 and MDM2; form a ternary complex involved in regulation of p53/TP53. Interacts with NOP53; the interaction is direct and promotes ARF nucleoplasmic relocalization and ubiquitin-mediated proteasomal degradation. Interacts with TTF1 (via the N-terminal region (NRD) and a C-terminal region); the interaction is direct and inhibits the nucleolar localization of TTF1. In terms of assembly, interacts with C1QBP. Post-translationally, ubiquitinated in normal cells by TRIP12 via the ubiquitin fusion degradation (UFD) pathway, a process that mediates ubiquitination at the N-terminus, regardless of the absence of lysine residues. Ubiquitination leads to its proteasomal degradation. In cancer cells, however, TRIP12 is located in a different cell compartment, preventing ubiquitination and degradation.

Its subcellular location is the nucleus. The protein resides in the nucleolus. It is found in the nucleoplasm. The protein localises to the mitochondrion. Functionally, capable of inducing cell cycle arrest in G1 and G2 phases. Acts as a tumor suppressor. Binds to MDM2 and blocks its nucleocytoplasmic shuttling by sequestering it in the nucleolus. This inhibits the oncogenic action of MDM2 by blocking MDM2-induced degradation of p53 and enhancing p53-dependent transactivation and apoptosis. Also induces G2 arrest and apoptosis in a p53-independent manner by preventing the activation of cyclin B1/CDC2 complexes. Binds to BCL6 and down-regulates BCL6-induced transcriptional repression. Binds to E2F1 and MYC and blocks their transcriptional activator activity but has no effect on MYC transcriptional repression. Binds to TOP1/TOPOI and stimulates its activity. This complex binds to rRNA gene promoters and may play a role in rRNA transcription and/or maturation. Interacts with NPM1/B23 and promotes its polyubiquitination and degradation, thus inhibiting rRNA processing. Plays a role in inhibiting ribosome biogenesis, perhaps by binding to the nucleolar localization sequence of transcription termination factor TTF1, and thereby preventing nucleolar localization of TTF1. Interacts with COMMD1 and promotes its 'Lys63'-linked polyubiquitination. Interacts with UBE2I/UBC9 and enhances sumoylation of a number of its binding partners including MDM2 and E2F1. Binds to HUWE1 and represses its ubiquitin ligase activity. May play a role in controlling cell proliferation and apoptosis during mammary gland development. Its function is as follows. May be involved in regulation of autophagy and caspase-independent cell death; the short-lived mitochondrial isoform is stabilized by C1QBP. This is Tumor suppressor ARF from Mus musculus (Mouse).